Reading from the N-terminus, the 418-residue chain is Glutamyl-tRNA reductase (418 aa).

Substrate is bound by residues 49–52 (TCNR), Ser107, 112–114 (EPQ), and Gln118. Catalysis depends on Cys50, which acts as the Nucleophile. Residue 187–192 (GAGETI) participates in NADP(+) binding.

It belongs to the glutamyl-tRNA reductase family. Homodimer.

It carries out the reaction (S)-4-amino-5-oxopentanoate + tRNA(Glu) + NADP(+) = L-glutamyl-tRNA(Glu) + NADPH + H(+). It functions in the pathway porphyrin-containing compound metabolism; protoporphyrin-IX biosynthesis; 5-aminolevulinate from L-glutamyl-tRNA(Glu): step 1/2. Functionally, catalyzes the NADPH-dependent reduction of glutamyl-tRNA(Glu) to glutamate 1-semialdehyde (GSA). In Aeromonas salmonicida (strain A449), this protein is Glutamyl-tRNA reductase.